The chain runs to 179 residues: Large ribosomal subunit protein uL5 (179 aa).

The protein belongs to the universal ribosomal protein uL5 family. In terms of assembly, part of the 50S ribosomal subunit; part of the 5S rRNA/L5/L18/L25 subcomplex. Contacts the 5S rRNA and the P site tRNA. Forms a bridge to the 30S subunit in the 70S ribosome.

Functionally, this is one of the proteins that bind and probably mediate the attachment of the 5S RNA into the large ribosomal subunit, where it forms part of the central protuberance. In the 70S ribosome it contacts protein S13 of the 30S subunit (bridge B1b), connecting the 2 subunits; this bridge is implicated in subunit movement. Contacts the P site tRNA; the 5S rRNA and some of its associated proteins might help stabilize positioning of ribosome-bound tRNAs. The chain is Large ribosomal subunit protein uL5 from Parasynechococcus marenigrum (strain WH8102).